The sequence spans 547 residues: Sensor histidine kinase CitA (547 aa).

The Cytoplasmic portion of the chain corresponds to 1 to 23 (MSIYPMYTRKITHWFARRSFQNR). A helical membrane pass occupies residues 24-44 (IFLLILFTSTIVMLAMSWYLT). Topologically, residues 45-180 (DITEERLHYQ…TIEQLENWLS (136 aa)) are periplasmic. 4 residues coordinate citrate: Arg-109, His-112, Arg-150, and Lys-152. A helical transmembrane segment spans residues 181–201 (LQISSLLIPMAIMLLLLLFCA). Residues 202-547 (RRFSLHIKKQ…IPLTRDEHHG (346 aa)) lie on the Cytoplasmic side of the membrane. Residues 225–264 (IQQSVLFESVFEGLIAIDSDYKITAINQTARRLLNLSQPE) enclose the PAS domain. The Histidine kinase domain maps to 347–542 (AVQHEHRNLI…IFTLYIPLTR (196 aa)). Phosphohistidine; by autocatalysis is present on His-350.

As to quaternary structure, homodimer. In vitro CitB and the CitA kinase domain form a complex, formation of which is enhanced by ATP. Post-translationally, autophosphorylated.

The protein localises to the cell inner membrane. The catalysed reaction is ATP + protein L-histidine = ADP + protein N-phospho-L-histidine.. In terms of biological role, member of the two-component regulatory system CitA/CitB. Probably activates CitB by phosphorylation. The periplasmic domain binds H-citrate(2-), which is essential for induction of the citrate-fermentation genes. The protein is Sensor histidine kinase CitA (citA) of Klebsiella pneumoniae.